An 81-amino-acid polypeptide reads, in one-letter code: ATP synthase subunit c (81 aa).

2 helical membrane passes run 3–23 (PLIA…GAIG) and 57–77 (LAFM…LLFA).

It belongs to the ATPase C chain family. F-type ATPases have 2 components, F(1) - the catalytic core - and F(0) - the membrane proton channel. F(1) has five subunits: alpha(3), beta(3), gamma(1), delta(1), epsilon(1). F(0) has four main subunits: a(1), b(1), b'(1) and c(10-14). The alpha and beta chains form an alternating ring which encloses part of the gamma chain. F(1) is attached to F(0) by a central stalk formed by the gamma and epsilon chains, while a peripheral stalk is formed by the delta, b and b' chains.

Its subcellular location is the cellular thylakoid membrane. In terms of biological role, f(1)F(0) ATP synthase produces ATP from ADP in the presence of a proton or sodium gradient. F-type ATPases consist of two structural domains, F(1) containing the extramembraneous catalytic core and F(0) containing the membrane proton channel, linked together by a central stalk and a peripheral stalk. During catalysis, ATP synthesis in the catalytic domain of F(1) is coupled via a rotary mechanism of the central stalk subunits to proton translocation. Its function is as follows. Key component of the F(0) channel; it plays a direct role in translocation across the membrane. A homomeric c-ring of between 10-14 subunits forms the central stalk rotor element with the F(1) delta and epsilon subunits. The protein is ATP synthase subunit c of Trichodesmium erythraeum (strain IMS101).